The sequence spans 189 residues: MLSMSNDRADTGGRILRAAASCVVDYGVDRVTLAEIARRAGVSRPTVYRRWPDTRSIMASMLTSHIADVLREVPLDGDDREALVKQIVAVADRLRGDDLIMSVMHSELARVYITERLGTSQQVLIEGLAARLTVAQRSGSVRSGDARRLATMVLLIAQSTIQSADIVDSILDSAALATELTHALNGYLC.

The HTH tetR-type domain maps to 9–69 (ADTGGRILRA…SMLTSHIADV (61 aa)). A DNA-binding region (H-T-H motif) is located at residues 32–51 (TLAEIARRAGVSRPTVYRRW).

This is an uncharacterized protein from Mycobacterium tuberculosis (strain CDC 1551 / Oshkosh).